An 80-amino-acid chain; its full sequence is Small ribosomal subunit protein uS17 (80 aa).

It belongs to the universal ribosomal protein uS17 family. As to quaternary structure, part of the 30S ribosomal subunit.

Its function is as follows. One of the primary rRNA binding proteins, it binds specifically to the 5'-end of 16S ribosomal RNA. The sequence is that of Small ribosomal subunit protein uS17 from Microcystis aeruginosa (strain NIES-843 / IAM M-2473).